Here is a 149-residue protein sequence, read N- to C-terminus: Ribose-5-phosphate isomerase B (149 aa).

9–10 is a D-ribulose 5-phosphate binding site; sequence DH. Catalysis depends on cysteine 66, which acts as the Proton acceptor. 67–71 serves as a coordination point for D-ribulose 5-phosphate; the sequence is GTGVG. Histidine 99 (proton donor) is an active-site residue. Asparagine 100, arginine 110, arginine 133, and arginine 137 together coordinate D-ribulose 5-phosphate.

Belongs to the LacAB/RpiB family. Homodimer, and homotetramer.

It carries out the reaction aldehydo-D-ribose 5-phosphate = D-ribulose 5-phosphate. The catalysed reaction is D-allose 6-phosphate = D-allulose 6-phosphate. It functions in the pathway carbohydrate degradation; pentose phosphate pathway; D-ribose 5-phosphate from D-ribulose 5-phosphate (non-oxidative stage): step 1/1. Inhibited by iodoacetate and glucose 6-phosphate. Functionally, catalyzes the interconversion of ribulose-5-P and ribose-5-P. It probably also has activity on D-allose 6-phosphate. The protein is Ribose-5-phosphate isomerase B of Escherichia coli (strain K12).